The chain runs to 322 residues: Cytochrome c biogenesis protein CcsA (322 aa).

8 helical membrane passes run 15–35 (FSIV…VDGI), 45–65 (GMIV…TYSG), 72–92 (LYES…VPYF), 98–120 (YLST…GLLT), 144–164 (MILG…LLVI), 226–246 (GISL…VWAN), 253–273 (WNWD…AIYL), and 287–307 (AIVA…VNLL).

The protein belongs to the CcmF/CycK/Ccl1/NrfE/CcsA family. May interact with Ccs1.

It localises to the plastid. The protein localises to the chloroplast thylakoid membrane. In terms of biological role, required during biogenesis of c-type cytochromes (cytochrome c6 and cytochrome f) at the step of heme attachment. The protein is Cytochrome c biogenesis protein CcsA of Coffea arabica (Arabian coffee).